We begin with the raw amino-acid sequence, 372 residues long: NAD(P)H-quinone oxidoreductase subunit 1 (372 aa).

A run of 9 helical transmembrane segments spans residues 27–47 (LLWLPLPMLMMLIVATVGVLV), 65–85 (PEYIGPLGILAPLADGLKLIF), 97–117 (WLFTLGPAVVVIPVFLSYIIV), 128–148 (LAMGVFLWIALSSIAPIGLLM), 176–196 (LALAVLAVAMMSNGLGTVEIV), 204–224 (ILSWNVWRQPIGFLVFWIAAL), 254–274 (FALFYLGAYVNLVLSALLVSV), 308–328 (VLGITMTLIKAYFFVFLAILL), and 347–367 (FLLPVGLVNLLLTAGLKLAFP).

This sequence belongs to the complex I subunit 1 family. NDH-1 is composed of at least 11 different subunits.

It localises to the cellular thylakoid membrane. The catalysed reaction is a plastoquinone + NADH + (n+1) H(+)(in) = a plastoquinol + NAD(+) + n H(+)(out). It catalyses the reaction a plastoquinone + NADPH + (n+1) H(+)(in) = a plastoquinol + NADP(+) + n H(+)(out). Its function is as follows. NDH-1 shuttles electrons from an unknown electron donor, via FMN and iron-sulfur (Fe-S) centers, to quinones in the respiratory and/or the photosynthetic chain. The immediate electron acceptor for the enzyme in this species is believed to be plastoquinone. Couples the redox reaction to proton translocation, and thus conserves the redox energy in a proton gradient. The chain is NAD(P)H-quinone oxidoreductase subunit 1 from Thermosynechococcus vestitus (strain NIES-2133 / IAM M-273 / BP-1).